Consider the following 358-residue polypeptide: UDP-N-acetylglucosamine--N-acetylmuramyl-(pentapeptide) pyrophosphoryl-undecaprenol N-acetylglucosamine transferase (358 aa).

UDP-N-acetyl-alpha-D-glucosamine contacts are provided by residues 13–15 (TAG), R166, S196, and Q291.

Belongs to the glycosyltransferase 28 family. MurG subfamily.

The protein localises to the cell membrane. The catalysed reaction is di-trans,octa-cis-undecaprenyl diphospho-N-acetyl-alpha-D-muramoyl-L-alanyl-D-glutamyl-meso-2,6-diaminopimeloyl-D-alanyl-D-alanine + UDP-N-acetyl-alpha-D-glucosamine = di-trans,octa-cis-undecaprenyl diphospho-[N-acetyl-alpha-D-glucosaminyl-(1-&gt;4)]-N-acetyl-alpha-D-muramoyl-L-alanyl-D-glutamyl-meso-2,6-diaminopimeloyl-D-alanyl-D-alanine + UDP + H(+). The protein operates within cell wall biogenesis; peptidoglycan biosynthesis. Functionally, cell wall formation. Catalyzes the transfer of a GlcNAc subunit on undecaprenyl-pyrophosphoryl-MurNAc-pentapeptide (lipid intermediate I) to form undecaprenyl-pyrophosphoryl-MurNAc-(pentapeptide)GlcNAc (lipid intermediate II). This chain is UDP-N-acetylglucosamine--N-acetylmuramyl-(pentapeptide) pyrophosphoryl-undecaprenol N-acetylglucosamine transferase, found in Clostridium botulinum (strain Alaska E43 / Type E3).